Here is a 642-residue protein sequence, read N- to C-terminus: Threonine--tRNA ligase (642 aa).

Residues 1–61 (MPAITLPDGS…AADAQVVFVT (61 aa)) enclose the TGS domain. A catalytic region spans residues 243 to 536 (DHRRLGKEMD…LIEQYAGRFP (294 aa)). Zn(2+) contacts are provided by Cys336, His387, and His513.

The protein belongs to the class-II aminoacyl-tRNA synthetase family. Homodimer. The cofactor is Zn(2+).

It is found in the cytoplasm. The catalysed reaction is tRNA(Thr) + L-threonine + ATP = L-threonyl-tRNA(Thr) + AMP + diphosphate + H(+). In terms of biological role, catalyzes the attachment of threonine to tRNA(Thr) in a two-step reaction: L-threonine is first activated by ATP to form Thr-AMP and then transferred to the acceptor end of tRNA(Thr). Also edits incorrectly charged L-seryl-tRNA(Thr). The protein is Threonine--tRNA ligase of Granulibacter bethesdensis (strain ATCC BAA-1260 / CGDNIH1).